The sequence spans 1491 residues: Terminal uridylyltransferase 7 (1491 aa).

Phosphothreonine is present on Thr64. Phosphoserine occurs at positions 132 and 172. Residues 165–203 are disordered; it reads MSEMEAGSPENKKQRSRPRKPRRTRTEDSEQDGDLDGPV. Positions 178-187 are enriched in basic residues; sequence QRSRPRKPRR. Residues 244-274 form a Matrin-type zinc finger; that stretch reads YTCKLCDALIDSIPFAHKHIKEKRHKKNLKE. The PAP-associated 1 domain maps to 551–600; the sequence is VGQLWVELLRFYALEFNLADLVISIRVKELISRESKDWPKKRIAIEDPYS. 2 positions are modified to phosphoserine: Ser600 and Ser747. Disordered regions lie at residues 740–774 and 834–911; these read AELP…KHPE and QSRT…CGEN. The segment covering 844–857 has biased composition (acidic residues); the sequence is DDEEEEEEEEEEEE. At Thr865 the chain carries Phosphothreonine. Positions 885-897 are enriched in acidic residues; sequence GEEDALSEEDDLA. At Ser891 the chain carries Phosphoserine. The interval 947-1491 is sufficient for monouridylation activity; that stretch reads RKLTFTKGKS…ASVKRTQQES (545 aa). The CCHC-type 1 zinc finger occupies 959–976; sequence VVCSLCKREGHLKKDCPE. UTP-binding positions include 1043–1046, 1053–1056, Asn1126, Lys1148, 1166–1170, and His1282; these read SSKN, SDLD, and SYAYT. Mg(2+) contacts are provided by Asp1054 and Asp1056. The PAP-associated 2 domain maps to 1230-1282; it reads VGQLWLGLLRFYTEEFDFKEHVISIRRKSLLTTFKKQWTSKYIVIEDPFDLNH. A CCHC-type 2 zinc finger spans residues 1341–1358; that stretch reads RCCRICGKIGHFMKDCPM. Disordered regions lie at residues 1362-1399 and 1463-1491; these read VRRR…EKEV and PQFK…QQES. The span at 1377–1399 shows a compositional bias: basic and acidic residues; that stretch reads SESKEKRSKEDKEIQNKYTEKEV. The CCHC-type 3 zinc finger occupies 1447 to 1464; the sequence is KRCFICGREGHIKKECPQ. Over residues 1470-1481 the composition is skewed to polar residues; the sequence is GSLSSKYMTQGR.

Belongs to the DNA polymerase type-B-like family. It depends on Mg(2+) as a cofactor. Requires Mn(2+) as cofactor.

It localises to the cytoplasm. The catalysed reaction is RNA(n) + UTP = RNA(n)-3'-uridine ribonucleotide + diphosphate. Uridylyltransferase that mediates the terminal uridylation of mRNAs with short (less than 25 nucleotides) poly(A) tails, hence facilitating global mRNA decay. Essential for both oocyte maturation and fertility. Through 3' terminal uridylation of mRNA, sculpts, with TUT7, the maternal transcriptome by eliminating transcripts during oocyte growth. Involved in microRNA (miRNA)-induced gene silencing through uridylation of deadenylated miRNA targets. Also acts as a suppressor of miRNA biogenesis by mediating the terminal uridylation of miRNA precursors, including that of let-7 (pre-let-7). Uridylated pre-let-7 RNA is not processed by Dicer and undergo degradation. Pre-let-7 uridylation is strongly enhanced in the presence of LIN28A. Due to functional redundancy between ZCCHC6 and ZCCHC11, the identification of the specific role of each of these proteins is difficult. Involved in microRNA (miRNA)-induced gene silencing through uridylation of deadenylated miRNA targets. Also functions as an integral regulator of microRNA biogenesiS using 3 different uridylation mechanisms. Acts as a suppressor of miRNA biogenesis by mediating the terminal uridylation of some miRNA precursors, including that of let-7 (pre-let-7). Uridylated pre-let-7 RNA is not processed by Dicer and undergo degradation. Pre-let-7 oligouridylation is strongly enhanced in the presence of LIN28A. In the absence of LIN28A, TUT7 and TUT4 monouridylate group II pre-miRNAs, which includes most of pre-let7 members, that shapes an optimal 3' end overhang for efficient processing. Add oligo-U tails to truncated pre-miRNAS with a 5' overhang which may promote rapid degradation of non-functional pre-miRNA species. Does not play a role in replication-dependent histone mRNA degradation. Due to functional redundancy between TUT4 and TUT7, the identification of the specific role of each of these proteins is difficult. TUT4 and TUT7 restrict retrotransposition of long interspersed element-1 (LINE-1) in cooperation with MOV10 counteracting the RNA chaperonne activity of L1RE1. TUT7 uridylates LINE-1 mRNAs in the cytoplasm which inhibits initiation of reverse transcription once in the nucleus, whereas uridylation by TUT4 destabilizes mRNAs in cytoplasmic ribonucleoprotein granules. The protein is Terminal uridylyltransferase 7 of Mus musculus (Mouse).